A 484-amino-acid polypeptide reads, in one-letter code: 3-isopropylmalate dehydratase large subunit (484 aa).

The [4Fe-4S] cluster site is built by Cys-352, Cys-412, and Cys-415. Positions 462-484 are disordered; sequence GTLSSPSDLDPAPESAAVSSSAA.

Belongs to the aconitase/IPM isomerase family. LeuC type 1 subfamily. As to quaternary structure, heterodimer of LeuC and LeuD. [4Fe-4S] cluster serves as cofactor.

The catalysed reaction is (2R,3S)-3-isopropylmalate = (2S)-2-isopropylmalate. The protein operates within amino-acid biosynthesis; L-leucine biosynthesis; L-leucine from 3-methyl-2-oxobutanoate: step 2/4. Catalyzes the isomerization between 2-isopropylmalate and 3-isopropylmalate, via the formation of 2-isopropylmaleate. This is 3-isopropylmalate dehydratase large subunit from Arthrobacter sp. (strain FB24).